The primary structure comprises 674 residues: MNHSNQMHHDNHESHNHHSGHAHHHGNFKVKFFVSLIFAIPIILLSPLMGVNLPFQFTFPGSEWVVLILSTILFFYGGKPFLSGGKDEIATKKPGMMTLVALGISVAYIYSLYAFYMNNFSSATGHTMDFFWELATLILIMLLGHWIEMNAVGNAGDALKKMAELLPNSAIKVMDNGQREEVKISDIMTDDIVEVKAGESIPTDGIIVQGQTSIDESLVTGESKKVQKNQNDNVIGGSINGSGTIQVKVTAVGEDGYLSQVMGLVNQAQNDKSSAELLSDKVAGYLFYFAVSVGVISFIVWMLIQNDVDFALERLVTVLVIACPHALGLAIPLVTARSTSIGAHNGLIIKNRESVEIAQHIDYVMMDKTGTLTEGNFSVNHYESFKNDLSNDTILSLFASLESQSNHPLAISIVDFAKSKNVSFTNPQDVNNIPGVGLEGLIHNKTYKITNVSYLDQHGFEYDNDLFIKLAQQGNSISYLIEDQQVIGMIAQGDQIKESSKQMVADLLSRNITPVMLTGDNNEVAHAVAKELGISDVHAQLMPEDKESIIKDYQSNGNKVMMVGDGINDAPSLIRADIGIAIGAGTDVAVDSGDIILVKSNPSDIIHFLTLSNNTMRKMVQNLWWGAGYNIVAVPLAAGILAFIGLILSPAIGAILMSLSTVIVAINAFTLKLK.

Residues 1-22 are disordered; the sequence is MNHSNQMHHDNHESHNHHSGHA. Residues 7 to 16 are compositionally biased toward basic and acidic residues; the sequence is MHHDNHESHN. 6 helical membrane passes run 32-52, 57-77, 95-115, 127-147, 284-304, and 315-335; these read FFVS…MGVN, FTFP…FFYG, GMMT…LYAF, TMDF…GHWI, GYLF…WMLI, and LVTV…PLVT. Aspartate 367 acts as the 4-aspartylphosphate intermediate in catalysis. Mg(2+) contacts are provided by aspartate 565 and aspartate 569. Helical transmembrane passes span 623–645 and 649–671; these read LWWG…AFIG and SPAI…AFTL.

The protein belongs to the cation transport ATPase (P-type) (TC 3.A.3) family. Type IB subfamily.

It localises to the cell membrane. It catalyses the reaction Cu(+)(in) + ATP + H2O = Cu(+)(out) + ADP + phosphate + H(+). Involved in copper transport. This chain is Probable copper-transporting P-type ATPase B (copB), found in Staphylococcus epidermidis (strain ATCC 35984 / DSM 28319 / BCRC 17069 / CCUG 31568 / BM 3577 / RP62A).